A 221-amino-acid chain; its full sequence is N-(5'-phosphoribosyl)anthranilate isomerase (221 aa).

Belongs to the TrpF family.

The enzyme catalyses N-(5-phospho-beta-D-ribosyl)anthranilate = 1-(2-carboxyphenylamino)-1-deoxy-D-ribulose 5-phosphate. The protein operates within amino-acid biosynthesis; L-tryptophan biosynthesis; L-tryptophan from chorismate: step 3/5. The chain is N-(5'-phosphoribosyl)anthranilate isomerase from Chlorobaculum parvum (strain DSM 263 / NCIMB 8327) (Chlorobium vibrioforme subsp. thiosulfatophilum).